Consider the following 117-residue polypeptide: UPF0342 protein LBUL_1430 (117 aa).

Belongs to the UPF0342 family.

The chain is UPF0342 protein LBUL_1430 from Lactobacillus delbrueckii subsp. bulgaricus (strain ATCC BAA-365 / Lb-18).